Here is a 213-residue protein sequence, read N- to C-terminus: Endonuclease III (213 aa).

The HhH domain maps to 108 to 127 (FKELIKLPGVGRKTANVVLN). The [4Fe-4S] cluster site is built by C187, C194, C197, and C203.

It belongs to the Nth/MutY family. [4Fe-4S] cluster serves as cofactor.

It carries out the reaction 2'-deoxyribonucleotide-(2'-deoxyribose 5'-phosphate)-2'-deoxyribonucleotide-DNA = a 3'-end 2'-deoxyribonucleotide-(2,3-dehydro-2,3-deoxyribose 5'-phosphate)-DNA + a 5'-end 5'-phospho-2'-deoxyribonucleoside-DNA + H(+). DNA repair enzyme that has both DNA N-glycosylase activity and AP-lyase activity. The DNA N-glycosylase activity releases various damaged pyrimidines from DNA by cleaving the N-glycosidic bond, leaving an AP (apurinic/apyrimidinic) site. The AP-lyase activity cleaves the phosphodiester bond 3' to the AP site by a beta-elimination, leaving a 3'-terminal unsaturated sugar and a product with a terminal 5'-phosphate. This Rickettsia felis (strain ATCC VR-1525 / URRWXCal2) (Rickettsia azadi) protein is Endonuclease III.